Here is a 797-residue protein sequence, read N- to C-terminus: Xaa-Pro dipeptidyl-peptidase (797 aa).

Active-site charge relay system residues include Ser370, Asp490, and His521.

The protein belongs to the peptidase S15 family. In terms of assembly, homodimer.

The protein localises to the cytoplasm. The enzyme catalyses Hydrolyzes Xaa-Pro-|- bonds to release unblocked, N-terminal dipeptides from substrates including Ala-Pro-|-p-nitroanilide and (sequentially) Tyr-Pro-|-Phe-Pro-|-Gly-Pro-|-Ile.. Functionally, removes N-terminal dipeptides sequentially from polypeptides having unsubstituted N-termini provided that the penultimate residue is proline. This is Xaa-Pro dipeptidyl-peptidase from Lacticaseibacillus paracasei (strain ATCC 334 / BCRC 17002 / CCUG 31169 / CIP 107868 / KCTC 3260 / NRRL B-441) (Lactobacillus paracasei).